We begin with the raw amino-acid sequence, 600 residues long: Single-strand DNA endonuclease 1 (600 aa).

Residues 1–97 are N-domain; it reads MGVKYLWDVL…KRRLKARFEI (97 aa). The segment at 2–97 is XPG-N domain; it reads GVKYLWDVLE…KRRLKARFEI (96 aa). 7 residues coordinate Mg(2+): D30, D76, E142, E144, D163, D165, and D215. The tract at residues 130–215 is XPG-I domain; that stretch reads STLGILCLDG…IALALLLGSD (86 aa). I-domain stretches follow at residues 130-218 and 130-219; these read STLG…DYSQ and STLG…YSQG. A 5'-3' exonuclease domain region spans residues 215 to 353; it reads DYSQGVRGLR…ILPKVAERNL (139 aa). A disordered region spans residues 433 to 458; sequence MAAKKKKPKPKQKQKETSSPTKSSSL. A compositionally biased stretch (basic residues) spans 435–444; that stretch reads AKKKKPKPKQ.

This sequence belongs to the XPG/RAD2 endonuclease family. GEN subfamily. It depends on Mg(2+) as a cofactor.

It is found in the nucleus. In terms of biological role, endonuclease which cleaves flap structures at the junction between single-stranded DNA and double-stranded DNA with a specific cleavage site in the 5' overhang strand exactly one nucleotide 3' of the branch point. Structure- and sequence-specific nuclease that resolves holliday junctions (HJs) by symmetrically oriented incisions in two opposing strands near the junction point, thus leading to ligatable products; HJs are physical links between homologous DNA molecules that arise as central intermediary structures during homologous recombination and repair in meiotic and somatic cells. Structure-specific nuclease with 5'-flap endonuclease activity, preferentially cleaving static flaps 5' overhang strand exactly one nucleotide in the 3' direction of the branch point and, to lower extent, on the two neighboring positions. Also able to cleave double-stranded flap strand 1 one nucleotide in the 3' direction of the branch point. Together with MUS81, essential for the resolution of toxic replication structures to ensure genome stability, and to maintain telomere integrity and replication. The sequence is that of Single-strand DNA endonuclease 1 from Arabidopsis thaliana (Mouse-ear cress).